The primary structure comprises 827 residues: SID1 transmembrane family member 1 (827 aa).

Residues 1 to 19 form the signal peptide; that stretch reads MRGCLRLALLCALPWLLLA. Topologically, residues 20 to 309 are extracellular; it reads ASPGHPAKSP…SIKESVYVKS (290 aa). Asparagine 57, asparagine 67, asparagine 83, asparagine 136, and asparagine 282 each carry an N-linked (GlcNAc...) asparagine glycan. Residues 310 to 330 traverse the membrane as a helical segment; sequence SLFSVFIFLSFYLGCLLVGFV. At 331–442 the chain is on the cytoplasmic side; that stretch reads HYLRFQRKSI…DRRIVSKKYK (112 aa). A disordered region spans residues 355-408; it reads ASHPIAASTPEGSNYGTIDESSSSPGRQMSSSDGGPPGQSDTDSSVEESDFDTM. Residues 364–374 are compositionally biased toward polar residues; sequence PEGSNYGTIDE. Residues 375-397 show a composition bias toward low complexity; the sequence is SSSSPGRQMSSSDGGPPGQSDTD. Over residues 398–408 the composition is skewed to acidic residues; the sequence is SSVEESDFDTM. The helical transmembrane segment at 443 to 463 threads the bilayer; sequence IYFWNIITIAVFYALPVIQLV. The Extracellular portion of the chain corresponds to 464 to 494; sequence ITYQTVVNVTGNQDICYYNFLCAHPLGVLSA. A glycan (N-linked (GlcNAc...) asparagine) is linked at asparagine 471. The helical transmembrane segment at 495-515 threads the bilayer; that stretch reads FNNILSNLGHVLLGFLFLLIV. Over 516–541 the chain is Cytoplasmic; the sequence is LRRDILHRRALEAKDIFAVEYGIPKH. Residues 542-562 form a helical membrane-spanning segment; the sequence is FGLFYAMGIALMMEGVLSACY. Over 563-572 the chain is Extracellular; sequence HVCPNYSNFQ. An N-linked (GlcNAc...) asparagine glycan is attached at asparagine 567. Residues 573-590 form a helical membrane-spanning segment; that stretch reads FDTSFMYMIAGLCMLKLY. Residues 591-600 are Cytoplasmic-facing; the sequence is QTRHPDINAS. A helical membrane pass occupies residues 601–621; sequence AYSAYASFAVVIMVTVLGVVF. Residues 622–626 are Extracellular-facing; sequence GKNDV. A helical transmembrane segment spans residues 627 to 647; the sequence is WFWVIFSAIHVLASLALSTQI. Residues 648 to 683 lie on the Cytoplasmic side of the membrane; it reads YYMGRFKIDLGIFRRAAMVFYTDCIQQCSRPLYMDR. The helical transmembrane segment at 684–704 threads the bilayer; sequence MVLLVVGNLVNWSFALFGLIY. Residues 705-710 are Extracellular-facing; it reads RPRDFA. A helical membrane pass occupies residues 711–731; that stretch reads SYMLGIFICNLLLYLAFYIIM. At 732-741 the chain is on the cytoplasmic side; it reads KLRSSEKVLP. A helical membrane pass occupies residues 742–762; sequence VPLFCIVATAVMWAAALYFFF. The Extracellular portion of the chain corresponds to 763-791; sequence QNLSSWEGTPAESREKNRECILLDFFDDH. Asparagine 764 is a glycosylation site (N-linked (GlcNAc...) asparagine). Residues 792 to 812 form a helical membrane-spanning segment; the sequence is DIWHFLSATALFFSFLVLLTL. At 813 to 827 the chain is on the cytoplasmic side; sequence DDDLDVVRRDQIPVF.

The protein belongs to the SID1 family.

Its subcellular location is the membrane. Functionally, in vitro binds long double-stranded RNA (dsRNA) (500 and 700 base pairs), but not dsRNA shorter than 300 bp. Not involved in RNA autophagy, a process in which RNA is directly imported into lysosomes in an ATP-dependent manner, and degraded. In Homo sapiens (Human), this protein is SID1 transmembrane family member 1 (SIDT1).